Reading from the N-terminus, the 508-residue chain is Enhancer of mRNA-decapping protein 3 (508 aa).

The Sm domain maps to 1-68; it reads MAMDWLGSIV…ITELKILEIP (68 aa). Residues 1-79 are required for P-body targeting and interaction with DCP1A; it reads MAMDWLGSIV…PGDNQQVGDL (79 aa). The tract at residues 98-194 is disordered; that stretch reads NGTGKVVKKP…KNKDDECFGD (97 aa). Phosphoserine is present on residues Ser-131, Ser-138, Ser-140, and Ser-161. Residues 191 to 296 form a required for interaction with DDX6 region; the sequence is CFGDDIEELP…HKKLLSVAEK (106 aa). The DFDF domain occupies 192 to 228; sequence FGDDIEELPDTDFDFEGNLALFDKAAVFEEIDTYERR. The YjeF N-terminal domain maps to 283–487; it reads SYELHKKLLS…DIGIPQQVFQ (205 aa).

It belongs to the EDC3 family. Homodimer (via YjeF N-terminal domain). Forms a complex with DCP1A, DCP2, DDX6 and EDC4/HEDLS, within this complex directly interacts with DCP1A and DDX6. Interacts with ZFP36.

The protein resides in the cytoplasm. It localises to the P-body. Binds single-stranded RNA. Involved in the process of mRNA degradation and in the positive regulation of mRNA decapping. The sequence is that of Enhancer of mRNA-decapping protein 3 (Edc3) from Mus musculus (Mouse).